Reading from the N-terminus, the 480-residue chain is EGF-like repeat and discoidin I-like domain-containing protein 3 (480 aa).

The N-terminal stretch at 1 to 23 is a signal peptide; the sequence is MKHLVAAWLLVGLSLGVPQFGKG. Residues 24-60 form the EGF-like 1 domain; it reads DICNPNPCENGGICLSGLADDSFSCECPEGFAGPNCS. 3 disulfides stabilise this stretch: Cys-26-Cys-37, Cys-31-Cys-48, and Cys-50-Cys-59. Thr-73 is a glycosylation site (O-linked (GalNAc...) threonine). 2 consecutive EGF-like domains span residues 74–117 and 119–155; these read SAGP…IHCQ and NINECEAEPCRNGGICTDLVANYSCECPGEFMGRNCQ. 3 disulfides stabilise this stretch: Cys-78–Cys-89, Cys-83–Cys-105, and Cys-107–Cys-116. O-linked (Fuc...) threonine glycosylation is present at Thr-88. Residues 96–98 carry the Cell attachment site motif; the sequence is RGD. Residues Asn-119, Ile-120, and Glu-122 each contribute to the Ca(2+) site. Intrachain disulfides connect Cys-123-Cys-134, Cys-128-Cys-143, Cys-145-Cys-154, Cys-158-Cys-314, Cys-301-Cys-305, and Cys-319-Cys-476. 2 residues coordinate Ca(2+): Asp-136 and Leu-137. Asn-140 is a glycosylation site (N-linked (GlcNAc...) asparagine). F5/8 type C domains lie at 158–314 and 319–476; these read CSGP…LLGC and CSEP…LLGC.

In terms of tissue distribution, expressed in angioblasts and early endothelial cells. By embryonic day 13.5, also expressed in a restricted group of non-endothelial cells including chondrocytes and retinal neurons.

The protein resides in the secreted. Its function is as follows. Promotes adhesion of endothelial cells through interaction with the alpha-v/beta-3 integrin receptor. Inhibits formation of vascular-like structures. May be involved in regulation of vascular morphogenesis of remodeling in embryonic development. This is EGF-like repeat and discoidin I-like domain-containing protein 3 (Edil3) from Mus musculus (Mouse).